The following is a 335-amino-acid chain: MGDTYSLVLVAGYLSIFLFIGAIGYFYLSKPRIPSSNVNEQQQQQQQQQQQQQQPQINIEDEPQQRGGIGRMNLRNRRQPIINQRDEDTESSGSDSDNSTNSDNYDDDNGQEGEGEDIGVVAPGIVSNRSGKKIGKKKLEKLKLKDEKRKAREYQEYLREEKKKTDLEKEEALKEKRLEEKENEKLRKEEEERIRIEKERKEDEEYNLLKSQISLQESGITKNEDYDKSLLQLFIKYLKEHKICLLEDIAIEFNIKTNEVIDRIKTLDKQGLISGVIDDRGKFIYITKEEMEAVAKFVNKKGRVNIEQIALESNRLIDFSKKVVDNNDQDPVDTN.

The Lumenal portion of the chain corresponds to 1 to 6 (MGDTYS). Residues 7–27 (LVLVAGYLSIFLFIGAIGYFY) form a helical membrane-spanning segment. The Cytoplasmic segment spans residues 28–335 (LSKPRIPSSN…NNDQDPVDTN (308 aa)). The segment at 37-124 (NVNEQQQQQQ…GEDIGVVAPG (88 aa)) is disordered. Composition is skewed to low complexity over residues 41 to 56 (QQQQ…QQPQ) and 91 to 103 (SSGS…TNSD). Over residues 104–117 (NYDDDNGQEGEGED) the composition is skewed to acidic residues.

It belongs to the DDRGK1 family.

Its subcellular location is the endoplasmic reticulum membrane. Functionally, substrate adapter for ufmylation, the covalent attachment of the ubiquitin-like modifier UFM1 to substrate proteins. The chain is DDRGK domain-containing protein 1 from Dictyostelium discoideum (Social amoeba).